Reading from the N-terminus, the 784-residue chain is Cadherin-5 (784 aa).

The signal sequence occupies residues 1-25 (MQRLMMLLATSGACLGLLAVAAVAA). Positions 26–47 (AGANPAQRDTHSLLPTHRRQKR) are excised as a propeptide. 5 consecutive Cadherin domains span residues 48–151 (DWIW…WPVF), 152–258 (THRL…FPFF), 259–372 (TQTK…PPIF), 373–477 (QQPF…DNAP), and 478–593 (EFAK…MAAQ). At 48–599 (DWIWNQMHID…MAAQVGVSIQ (552 aa)) the chain is on the extracellular side. Ca(2+) contacts are provided by Glu58 and Glu59. Residue Asn61 is glycosylated (N-linked (GlcNAc...) (complex) asparagine). 2 residues coordinate Ca(2+): Asp109 and Glu111. A glycan (N-linked (GlcNAc...) (complex) asparagine) is linked at Asn112. 5 residues coordinate Ca(2+): Asp143, Val144, Asn145, Asp146, and Asn147. Asn157 is a glycosylation site (N-linked (GlcNAc...) asparagine). The Ca(2+) site is built by Asp177, Asp179, His186, and Asp231. N-linked (GlcNAc...) asparagine glycosylation occurs at Asn362. The N-linked (GlcNAc...) (complex) asparagine glycan is linked to Asn442. N-linked (GlcNAc...) asparagine glycans are attached at residues Asn523 and Asn535. A helical transmembrane segment spans residues 600–620 (AVVAILLCILTITVITLLIFL). A required for interaction with PALS1 region spans residues 621–660 (RRRLRKQARAHGKSVPEIHEQLVTYDEEGGGEMDTTSYDV). Residues 621–784 (RRRLRKQARA…GSDPREELLY (164 aa)) lie on the Cytoplasmic side of the membrane.

As to quaternary structure, part of a complex composed of AMOTL2, MAGI1 and CDH5, within the complex AMOTL2 acts as a scaffold protein for the interaction of MAGI1 with CDH5. The complex is required for coupling actin fibers to cell junctions in endothelial cells. Within the complex AMOTL2 (via its N-terminus) interacts with CDH5. Interacts (via cadherin 5 domain) with PTPRB. Interacts with TRPC4. Interacts with KRIT1. Interacts with PARD3. Interacts with RTN4 (isoform B). Interacts with PALS1; the interaction promotes PALS1 localization to cell junctions and is required for CDH5-mediated vascular lumen formation and endothelial cell. Interacts with CTNND1/p120-catenin; the interaction controls CADH5 endocytosis. Phosphorylated on tyrosine residues by KDR/VEGFR-2. Dephosphorylated by PTPRB. Post-translationally, O-glycosylated. In terms of tissue distribution, expressed in endothelial cells (at protein level). Expressed in the brain.

It localises to the cell junction. The protein localises to the adherens junction. The protein resides in the cell membrane. Its subcellular location is the cytoplasm. In terms of biological role, cadherins are calcium-dependent cell adhesion proteins. They preferentially interact with themselves in a homophilic manner in connecting cells; cadherins may thus contribute to the sorting of heterogeneous cell types. This cadherin may play a important role in endothelial cell biology through control of the cohesion and organization of the intercellular junctions. It associates with alpha-catenin forming a link to the cytoskeleton. Plays a role in coupling actin fibers to cell junctions in endothelial cells, via acting as a cell junctional complex anchor for AMOTL2 and MAGI1. Acts in concert with KRIT1 and PALS1 to establish and maintain correct endothelial cell polarity and vascular lumen. These effects are mediated by recruitment and activation of the Par polarity complex and RAP1B. Required for activation of PRKCZ and for the localization of phosphorylated PRKCZ, PARD3, TIAM1 and RAP1B to the cell junction. Associates with CTNND1/p120-catenin to control CADH5 endocytosis. This is Cadherin-5 from Homo sapiens (Human).